Reading from the N-terminus, the 323-residue chain is 4-diphosphocytidyl-2-C-methyl-D-erythritol kinase (323 aa).

K25 is an active-site residue. 110-120 (PVAGGMAGGSA) is a binding site for ATP. The active site involves D152.

It belongs to the GHMP kinase family. IspE subfamily.

It catalyses the reaction 4-CDP-2-C-methyl-D-erythritol + ATP = 4-CDP-2-C-methyl-D-erythritol 2-phosphate + ADP + H(+). It functions in the pathway isoprenoid biosynthesis; isopentenyl diphosphate biosynthesis via DXP pathway; isopentenyl diphosphate from 1-deoxy-D-xylulose 5-phosphate: step 3/6. Its function is as follows. Catalyzes the phosphorylation of the position 2 hydroxy group of 4-diphosphocytidyl-2C-methyl-D-erythritol. This chain is 4-diphosphocytidyl-2-C-methyl-D-erythritol kinase, found in Mycobacterium leprae (strain Br4923).